The chain runs to 627 residues: 2-oxoacid:ferredoxin oxidoreductase 1, subunit alpha (627 aa).

Residues 253-257 (YPITP) carry the YPITP motif motif. The substrate site is built by Thr256 and Arg344.

As to quaternary structure, heterodimer composed of an alpha and a beta subunit.

The enzyme catalyses a 2-oxocarboxylate + 2 oxidized [2Fe-2S]-[ferredoxin] + CoA = an acyl-CoA + 2 reduced [2Fe-2S]-[ferredoxin] + CO2 + H(+). Its activity is regulated as follows. Inhibited by low concentration of 4-fluoro-7-nitrobenzofurazan (NBD-F). Its function is as follows. Catalyzes the coenzyme A-dependent oxidative decarboxylation of different 2-oxoacids such as 2-oxoglutarate, pyruvate and 2-oxobutyrate to form their CoA derivatives. The chain is 2-oxoacid:ferredoxin oxidoreductase 1, subunit alpha from Sulfurisphaera tokodaii (strain DSM 16993 / JCM 10545 / NBRC 100140 / 7) (Sulfolobus tokodaii).